Here is a 580-residue protein sequence, read N- to C-terminus: Cleavage stimulation factor subunit 2 (580 aa).

Position 14 is a phosphoserine (Ser-14). The RRM domain maps to 16-94 (RSVFVGNIPY…RALRVDNAAS (79 aa)). The segment at 108–248 (APVIESPYGE…VNGAPPMMQA (141 aa)) is interactions with CSTF3 and SYMPK. A Glycyl lysine isopeptide (Lys-Gly) (interchain with G-Cter in SUMO2) cross-link involves residue Lys-189. Arg-308 bears the Omega-N-methylarginine mark. 2 disordered regions span residues 311-331 (LPTN…DPRG) and 347-414 (LGPP…RGLD). Composition is skewed to basic and acidic residues over residues 363 to 376 (PGHE…HDMR) and 405 to 414 (RGGRDPRGLD). One copy of the 1; approximate repeat lies at 413 to 417 (LDARG). The segment at 413–472 (LDARGMEARAMEARGLDARGLEARAMEARAMEARAMEARAMEARAMEARAMEARGMDTRG) is 12 X 5 AA tandem repeats of M-E-A-R-[AG]. 2 tandem repeats follow at residues 418 to 422 (MEARA) and 423 to 427 (MEARG). One copy of the 4; approximate repeat lies at 428-432 (LDARG). A 5; approximate repeat occupies 433–437 (LEARA). 6 tandem repeats follow at residues 438–442 (MEARA), 443–447 (MEARA), 448–452 (MEARA), 453–457 (MEARA), 458–462 (MEARA), and 463–467 (MEARG). The 12; approximate repeat unit spans residues 468-472 (MDTRG). Arg-471 and Arg-478 each carry omega-N-methylarginine. The disordered stretch occupies residues 512–536 (MQGASMQGGSQPGGFSPGQSQVTPQ). The interaction with RPO2TC1 stretch occupies residues 517 to 580 (MQGGSQPGGF…EQIQKSTGAP (64 aa)). Ser-521 and Ser-527 each carry phosphoserine.

In terms of assembly, the CSTF complex is composed of CSTF1 (50 kDa subunit), CSTF2 (64 kDa subunit) and CSTF3 (77 kDa subunit). CSTF2 directly interacts with CSTF3, SYMPK and RPO2TC1. Interacts with HSF1 in heat-stressed cells. Interacts with CPSF2, CPSF3 and FIP1L1. Interacts with DDX1. In terms of tissue distribution, expressed in most somatic cell types (at protein level). Highly expressed in testis, except in meiotic spermatocytes.

It localises to the nucleus. Its function is as follows. One of the multiple factors required for polyadenylation and 3'-end cleavage of mammalian pre-mRNAs. This subunit is directly involved in the binding to pre-mRNAs. The polypeptide is Cleavage stimulation factor subunit 2 (Cstf2) (Mus musculus (Mouse)).